Here is a 236-residue protein sequence, read N- to C-terminus: Factor V activator RVV-V alpha (236 aa).

Residues 1 to 227 form the Peptidase S1 domain; sequence VVGGDECNIN…YNNWIQNIIA (227 aa). 6 cysteine pairs are disulfide-bonded: C7–C141, C28–C44, C76–C234, C120–C188, C152–C167, and C178–C203. Active-site charge relay system residues include H43 and D88. S182 acts as the Charge relay system in catalysis. N229 is a glycosylation site (N-linked (GlcNAc...) asparagine).

Belongs to the peptidase S1 family. Snake venom subfamily. Monomer. In terms of tissue distribution, expressed by the venom gland.

The protein localises to the secreted. The enzyme catalyses Fully activates human clotting factor V by a single cleavage at the 1545-Trp-Tyr-Leu-Arg-|-Ser-Asn-Asn-Gly-1552 bond. Cattle, but not rabbit, factor V is cleaved, and no other proteins of the clotting system are attacked. Esterase activity is observed on Bz-Arg-OEt and Tos-Arg-OMe, and amidase activity on Phe-pipecolyl-Arg-NHPhNO2.. Inhibited by D-Phe-Pro-Arg-chloromethyl ketone (FPRCK) (97%), PMSF (76%), and benzamidine (50%). Is not inhibited by BPTI, antithrombin and EDTA. Functionally, venom serine protease that activates factor V (F5) in a calcium-independent manner. It cleaves the Arg(1545)-Ser(1546) linkage in the human factor V molecule. Induces the coagulation of mammalian plasma. In Daboia siamensis (Eastern Russel's viper), this protein is Factor V activator RVV-V alpha.